We begin with the raw amino-acid sequence, 188 residues long: Ribonuclease HII (188 aa).

Positions 6–188 (KPLCGIDEAG…VKGLDEPTLF (183 aa)) constitute an RNase H type-2 domain. Positions 12, 13, and 99 each coordinate a divalent metal cation.

This sequence belongs to the RNase HII family. It depends on Mn(2+) as a cofactor. Mg(2+) is required as a cofactor.

It localises to the cytoplasm. The enzyme catalyses Endonucleolytic cleavage to 5'-phosphomonoester.. Functionally, endonuclease that specifically degrades the RNA of RNA-DNA hybrids. This is Ribonuclease HII from Sulfurovum sp. (strain NBC37-1).